We begin with the raw amino-acid sequence, 551 residues long: Calnexin homolog (551 aa).

The N-terminal stretch at 1-26 is a signal peptide; that stretch reads MVDRKEIPLAMGLLAVLLFFVASSSS. Topologically, residues 27-480 are lumenal; that stretch reads FHLVRASDEV…EKGEKQPNLT (454 aa). Residues S44 and D75 each coordinate Ca(2+). Cysteines 118 and 153 form a disulfide. The an alpha-D-glucoside site is built by Y122 and K124. N-linked (GlcNAc...) asparagine glycosylation occurs at N140. Positions 144 and 151 each coordinate an alpha-D-glucoside. The tract at residues 226-330 is disordered; that stretch reads ALIPSKTIPD…CGEWKRPTKS (105 aa). The segment at 233–364 is p domain (Extended arm); sequence IPDPDDKKPE…QEIPNPEYFE (132 aa). Composition is skewed to basic and acidic residues over residues 234-269 and 276-295; these read PDPD…PREI and KPEP…AKPE. Tandem repeats lie at residues 235 to 246, 252 to 263, 271 to 282, 289 to 299, and 303 to 313. 2 4 X approximate repeats regions span residues 235–299 and 303–360; these read DPDD…DWDD and GEWE…IPNP. Residues 296–305 are compositionally biased toward acidic residues; the sequence is DWDDEEDGEW. A disulfide bridge links C315 with C321. 3 consecutive repeat copies span residues 322-332, 336-346, and 350-360. An alpha-D-glucoside is bound at residue E379. D390 is a Ca(2+) binding site. An N-linked (GlcNAc...) asparagine glycan is attached at N478. The chain crosses the membrane as a helical span at residues 481 to 501; it reads IGIIVSVVIVFVSIFFRLIFG. Over 502–551 the chain is Cytoplasmic; the sequence is GKKPANVEANVEKKKTNTETTSKQDGGEKEDNKEKEETANPPRRRPKRDN. Residues 510 to 551 are disordered; the sequence is ANVEKKKTNTETTSKQDGGEKEDNKEKEETANPPRRRPKRDN. Positions 526–539 are enriched in basic and acidic residues; it reads DGGEKEDNKEKEET.

Belongs to the calreticulin family. As to expression, in vegetative and flowering tissues.

It localises to the endoplasmic reticulum membrane. Functionally, calcium-binding protein that interacts with newly synthesized monoglucosylated glycoproteins in the endoplasmic reticulum. It may act in assisting protein assembly and/or in the retention within the ER of unassembled protein subunits. It seems to play a major role in the quality control apparatus of the ER by the retention of incorrectly folded proteins. This Pisum sativum (Garden pea) protein is Calnexin homolog.